The primary structure comprises 118 residues: MTSYTFTRELRLLTPAQFQAVFTNPVKASSAEITLLATPNTQEHPRVGLTVPKKQVKRAHDRNRVKRVIRESFRMHQHDLPSLDIVVLVRKGVMDLENPELHKLVDKLWRKLSRRFNG.

This sequence belongs to the RnpA family. In terms of assembly, consists of a catalytic RNA component (M1 or rnpB) and a protein subunit.

It carries out the reaction Endonucleolytic cleavage of RNA, removing 5'-extranucleotides from tRNA precursor.. In terms of biological role, RNaseP catalyzes the removal of the 5'-leader sequence from pre-tRNA to produce the mature 5'-terminus. It can also cleave other RNA substrates such as 4.5S RNA. The protein component plays an auxiliary but essential role in vivo by binding to the 5'-leader sequence and broadening the substrate specificity of the ribozyme. The protein is Ribonuclease P protein component of Shewanella amazonensis (strain ATCC BAA-1098 / SB2B).